Here is a 531-residue protein sequence, read N- to C-terminus: Importin subunit alpha-3 (531 aa).

Positions 1–58 constitute an IBB domain; the sequence is MSLRPSAKTEVRRNRYKVAVDAEEGRRRREDNLVEIRKNKREENLQKKRFTSSMAFGS. ARM repeat units lie at residues 111–153, 154–198, 199–236, 237–281, 282–321, 322–364, 365–405, and 406–447; these read INEV…TSEN, TNVI…CRDL, VLSY…RGKP, PPAF…DKIQ, AVIE…DDLQ, TQMV…NADQ, IQAV…GGTH, and DQIK…VVGE. The segment at 500–524 is disordered; sequence DNEEEGNDENHAPQSGFQFGSTNVP. The span at 511–524 shows a compositional bias: polar residues; the sequence is APQSGFQFGSTNVP.

This sequence belongs to the importin alpha family. In terms of assembly, forms a complex with importin subunit beta-1. Interacts with PRL1. Interacts with A.tumefaciens VirD2 and VirE2.

The protein resides in the nucleus. Functionally, binds to conventional NLS motifs and mediates nuclear protein import across the nuclear envelope. Acts as a cellular receptor for the nuclear import of the virD2 protein of Agrobacterium, but is not essential for Agrobacterium-mediated root transformation. May be involved in the regulation of pathogen-induced salicylic acid accumulation. The protein is Importin subunit alpha-3 of Arabidopsis thaliana (Mouse-ear cress).